A 279-amino-acid polypeptide reads, in one-letter code: Cell division protein FtsQ (279 aa).

Positions 1-28 are disordered; the sequence is MTPMKKQLDKSLGSRRGATATRAKERAD. Residues 1 to 48 lie on the Cytoplasmic side of the membrane; sequence MTPMKKQLDKSLGSRRGATATRAKERADNRNTGPAAIVRLLAFIPWNR. The helical transmembrane segment at 49–69 threads the bilayer; the sequence is VLLHVSIFCFWLLVLSALIAG. Residues 70-279 lie on the Periplasmic side of the membrane; the sequence is VKWLDRPVAT…WKADVTPEQG (210 aa). The region spanning 75-144 is the POTRA domain; the sequence is RPVATVQVVG…DAVQVDLEEE (70 aa).

It belongs to the FtsQ/DivIB family. FtsQ subfamily. In terms of assembly, part of a complex composed of FtsB, FtsL and FtsQ.

It is found in the cell inner membrane. Functionally, essential cell division protein. May link together the upstream cell division proteins, which are predominantly cytoplasmic, with the downstream cell division proteins, which are predominantly periplasmic. May control correct divisome assembly. The chain is Cell division protein FtsQ from Hahella chejuensis (strain KCTC 2396).